We begin with the raw amino-acid sequence, 465 residues long: Ribulose bisphosphate carboxylase large chain (465 aa).

Lys-4 carries the post-translational modification N6,N6,N6-trimethyllysine. Substrate contacts are provided by Xaa-113 and Thr-163. The active-site Proton acceptor is Lys-165. Lys-167 contacts substrate. Residues Lys-191, Asp-193, and Glu-194 each coordinate Mg(2+). Lys-191 bears the N6-carboxylysine mark. His-284 (proton acceptor) is an active-site residue. 3 residues coordinate substrate: Arg-285, His-317, and Ser-369.

This sequence belongs to the RuBisCO large chain family. Type I subfamily. As to quaternary structure, heterohexadecamer of 8 large chains and 8 small chains; disulfide-linked. The disulfide link is formed within the large subunit homodimers. The cofactor is Mg(2+). In terms of processing, the disulfide bond which can form in the large chain dimeric partners within the hexadecamer appears to be associated with oxidative stress and protein turnover.

The protein resides in the plastid. The protein localises to the chloroplast. The catalysed reaction is 2 (2R)-3-phosphoglycerate + 2 H(+) = D-ribulose 1,5-bisphosphate + CO2 + H2O. It catalyses the reaction D-ribulose 1,5-bisphosphate + O2 = 2-phosphoglycolate + (2R)-3-phosphoglycerate + 2 H(+). In terms of biological role, ruBisCO catalyzes two reactions: the carboxylation of D-ribulose 1,5-bisphosphate, the primary event in carbon dioxide fixation, as well as the oxidative fragmentation of the pentose substrate in the photorespiration process. Both reactions occur simultaneously and in competition at the same active site. The protein is Ribulose bisphosphate carboxylase large chain of Cornus obliqua (Silky dogwood).